The chain runs to 371 residues: Cytochrome b (371 aa).

4 helical membrane passes run 25–45 (FGSM…FLAV), 69–90 (WMMQ…YTHI), 105–125 (WLSG…GYVL), and 170–190 (FFAL…LHIM). Heme b is bound by residues His75 and His89. Residues His174 and His188 each contribute to the heme b site. His193 contributes to the a ubiquinone binding site. The next 4 membrane-spanning stretches (helical) occupy residues 218–238 (YKDM…VAFF), 280–300 (LGGA…PFTH), 312–332 (IMQL…WAAT), and 339–358 (FTTI…ITNP).

Belongs to the cytochrome b family. The cytochrome bc1 complex contains 3 respiratory subunits (MT-CYB, CYC1 and UQCRFS1), 2 core proteins (UQCRC1 and UQCRC2) and probably 6 low-molecular weight proteins. Heme b is required as a cofactor.

The protein resides in the mitochondrion inner membrane. Its function is as follows. Component of the ubiquinol-cytochrome c reductase complex (complex III or cytochrome b-c1 complex) that is part of the mitochondrial respiratory chain. The b-c1 complex mediates electron transfer from ubiquinol to cytochrome c. Contributes to the generation of a proton gradient across the mitochondrial membrane that is then used for ATP synthesis. The sequence is that of Cytochrome b (MT-CYB) from Eryx colubrinus colubrinus.